Here is a 427-residue protein sequence, read N- to C-terminus: Tol-Pal system protein TolB (427 aa).

Positions 1 to 23 (MKLLKRLVSVFAIVLAVGSNAFA) are cleaved as a signal peptide.

Belongs to the TolB family. In terms of assembly, the Tol-Pal system is composed of five core proteins: the inner membrane proteins TolA, TolQ and TolR, the periplasmic protein TolB and the outer membrane protein Pal. They form a network linking the inner and outer membranes and the peptidoglycan layer.

Its subcellular location is the periplasm. In terms of biological role, part of the Tol-Pal system, which plays a role in outer membrane invagination during cell division and is important for maintaining outer membrane integrity. This chain is Tol-Pal system protein TolB, found in Haemophilus influenzae (strain ATCC 51907 / DSM 11121 / KW20 / Rd).